We begin with the raw amino-acid sequence, 123 residues long: Large ribosomal subunit protein uL29 (123 aa).

Residue Lys19 is modified to N6-acetyllysine. Lys25 participates in a covalent cross-link: Glycyl lysine isopeptide (Lys-Gly) (interchain with G-Cter in SUMO2). A Phosphoserine modification is found at Ser29. Lys43 is subject to N6-acetyllysine. Positions 95–114 (LNKHEENLKTKKQQRKERLY) are disordered.

This sequence belongs to the universal ribosomal protein uL29 family. As to quaternary structure, component of the large ribosomal subunit.

The protein resides in the cytoplasm. Functionally, component of the large ribosomal subunit. The ribosome is a large ribonucleoprotein complex responsible for the synthesis of proteins in the cell. The protein is Large ribosomal subunit protein uL29 (RPL35) of Bos taurus (Bovine).